The following is a 251-amino-acid chain: Ditrans,polycis-undecaprenyl-diphosphate synthase ((2E,6E)-farnesyl-diphosphate specific) (251 aa).

The active site involves D19. D19 lines the Mg(2+) pocket. Residues 20 to 23 (GNNR), W24, H36, and 64 to 66 (SSE) each bind substrate. N67 (proton acceptor) is an active-site residue. Residues W68, R70, R187, and 193–195 (RIS) contribute to the substrate site. E206 lines the Mg(2+) pocket.

The protein belongs to the UPP synthase family. Homodimer. Mg(2+) serves as cofactor.

The catalysed reaction is 8 isopentenyl diphosphate + (2E,6E)-farnesyl diphosphate = di-trans,octa-cis-undecaprenyl diphosphate + 8 diphosphate. In terms of biological role, catalyzes the sequential condensation of isopentenyl diphosphate (IPP) with (2E,6E)-farnesyl diphosphate (E,E-FPP) to yield (2Z,6Z,10Z,14Z,18Z,22Z,26Z,30Z,34E,38E)-undecaprenyl diphosphate (di-trans,octa-cis-UPP). UPP is the precursor of glycosyl carrier lipid in the biosynthesis of bacterial cell wall polysaccharide components such as peptidoglycan and lipopolysaccharide. The sequence is that of Ditrans,polycis-undecaprenyl-diphosphate synthase ((2E,6E)-farnesyl-diphosphate specific) from Pseudomonas aeruginosa (strain ATCC 15692 / DSM 22644 / CIP 104116 / JCM 14847 / LMG 12228 / 1C / PRS 101 / PAO1).